The sequence spans 341 residues: tRNA N6-adenosine threonylcarbamoyltransferase (341 aa).

The Fe cation site is built by His-115 and His-119. Residues 137–141, Asp-170, Gly-183, Asp-187, and Asn-276 each bind substrate; that span reads IVSGG. Asp-304 contacts Fe cation.

It belongs to the KAE1 / TsaD family. Requires Fe(2+) as cofactor.

Its subcellular location is the cytoplasm. The enzyme catalyses L-threonylcarbamoyladenylate + adenosine(37) in tRNA = N(6)-L-threonylcarbamoyladenosine(37) in tRNA + AMP + H(+). Functionally, required for the formation of a threonylcarbamoyl group on adenosine at position 37 (t(6)A37) in tRNAs that read codons beginning with adenine. Is involved in the transfer of the threonylcarbamoyl moiety of threonylcarbamoyl-AMP (TC-AMP) to the N6 group of A37, together with TsaE and TsaB. TsaD likely plays a direct catalytic role in this reaction. This is tRNA N6-adenosine threonylcarbamoyltransferase from Staphylococcus aureus (strain MRSA252).